Consider the following 405-residue polypeptide: Probable tRNA sulfurtransferase (405 aa).

The THUMP domain occupies 60-165 (TEVDKRLKKV…QDAVYISNQL (106 aa)). ATP contacts are provided by residues 183-184 (ML), 208-209 (HF), Arg265, Gly287, and Gln296.

The protein belongs to the ThiI family.

It is found in the cytoplasm. The enzyme catalyses [ThiI sulfur-carrier protein]-S-sulfanyl-L-cysteine + a uridine in tRNA + 2 reduced [2Fe-2S]-[ferredoxin] + ATP + H(+) = [ThiI sulfur-carrier protein]-L-cysteine + a 4-thiouridine in tRNA + 2 oxidized [2Fe-2S]-[ferredoxin] + AMP + diphosphate. It carries out the reaction [ThiS sulfur-carrier protein]-C-terminal Gly-Gly-AMP + S-sulfanyl-L-cysteinyl-[cysteine desulfurase] + AH2 = [ThiS sulfur-carrier protein]-C-terminal-Gly-aminoethanethioate + L-cysteinyl-[cysteine desulfurase] + A + AMP + 2 H(+). It participates in cofactor biosynthesis; thiamine diphosphate biosynthesis. Functionally, catalyzes the ATP-dependent transfer of a sulfur to tRNA to produce 4-thiouridine in position 8 of tRNAs, which functions as a near-UV photosensor. Also catalyzes the transfer of sulfur to the sulfur carrier protein ThiS, forming ThiS-thiocarboxylate. This is a step in the synthesis of thiazole, in the thiamine biosynthesis pathway. The sulfur is donated as persulfide by IscS. The chain is Probable tRNA sulfurtransferase from Lactobacillus acidophilus (strain ATCC 700396 / NCK56 / N2 / NCFM).